The sequence spans 256 residues: GTP cyclohydrolase FolE2 (256 aa).

Belongs to the GTP cyclohydrolase IV family.

It catalyses the reaction GTP + H2O = 7,8-dihydroneopterin 3'-triphosphate + formate + H(+). The protein operates within cofactor biosynthesis; 7,8-dihydroneopterin triphosphate biosynthesis; 7,8-dihydroneopterin triphosphate from GTP: step 1/1. In terms of biological role, converts GTP to 7,8-dihydroneopterin triphosphate. This is GTP cyclohydrolase FolE2 from Maridesulfovibrio salexigens (strain ATCC 14822 / DSM 2638 / NCIMB 8403 / VKM B-1763) (Desulfovibrio salexigens).